The chain runs to 85 residues: Putative regulatory protein Dtur_1444 (85 aa).

Belongs to the RemA family.

This Dictyoglomus turgidum (strain DSM 6724 / Z-1310) protein is Putative regulatory protein Dtur_1444.